We begin with the raw amino-acid sequence, 431 residues long: Trigger factor (431 aa).

The PPIase FKBP-type domain maps to 163-248 (GDTVVIDYAG…IHEVKGKELP (86 aa)).

Belongs to the FKBP-type PPIase family. Tig subfamily.

Its subcellular location is the cytoplasm. The catalysed reaction is [protein]-peptidylproline (omega=180) = [protein]-peptidylproline (omega=0). Its function is as follows. Involved in protein export. Acts as a chaperone by maintaining the newly synthesized protein in an open conformation. Functions as a peptidyl-prolyl cis-trans isomerase. This Latilactobacillus sakei subsp. sakei (strain 23K) (Lactobacillus sakei subsp. sakei) protein is Trigger factor.